A 398-amino-acid chain; its full sequence is CCA-adding enzyme (398 aa).

ATP contacts are provided by glycine 32 and arginine 35. Residues glycine 32 and arginine 35 each contribute to the CTP site. 2 residues coordinate Mg(2+): aspartate 45 and aspartate 47. Residues arginine 116, aspartate 159, arginine 162, arginine 165, and arginine 168 each contribute to the ATP site. Arginine 116, aspartate 159, arginine 162, arginine 165, and arginine 168 together coordinate CTP.

This sequence belongs to the tRNA nucleotidyltransferase/poly(A) polymerase family. Bacterial CCA-adding enzyme type 3 subfamily. Homodimer. It depends on Mg(2+) as a cofactor.

It carries out the reaction a tRNA precursor + 2 CTP + ATP = a tRNA with a 3' CCA end + 3 diphosphate. The enzyme catalyses a tRNA with a 3' CCA end + 2 CTP + ATP = a tRNA with a 3' CCACCA end + 3 diphosphate. Its function is as follows. Catalyzes the addition and repair of the essential 3'-terminal CCA sequence in tRNAs without using a nucleic acid template. Adds these three nucleotides in the order of C, C, and A to the tRNA nucleotide-73, using CTP and ATP as substrates and producing inorganic pyrophosphate. tRNA 3'-terminal CCA addition is required both for tRNA processing and repair. Also involved in tRNA surveillance by mediating tandem CCA addition to generate a CCACCA at the 3' terminus of unstable tRNAs. While stable tRNAs receive only 3'-terminal CCA, unstable tRNAs are marked with CCACCA and rapidly degraded. The chain is CCA-adding enzyme from Lacticaseibacillus paracasei (strain ATCC 334 / BCRC 17002 / CCUG 31169 / CIP 107868 / KCTC 3260 / NRRL B-441) (Lactobacillus paracasei).